The sequence spans 200 residues: Recombination protein RecR (200 aa).

The C4-type zinc finger occupies 57 to 72; it reads CSHCRTFTENERCEIC. One can recognise a Toprim domain in the interval 81 to 176; the sequence is GLLCVVESPA…KVSRIAHGVP (96 aa).

The protein belongs to the RecR family.

May play a role in DNA repair. It seems to be involved in an RecBC-independent recombinational process of DNA repair. It may act with RecF and RecO. The protein is Recombination protein RecR of Aeromonas hydrophila subsp. hydrophila (strain ATCC 7966 / DSM 30187 / BCRC 13018 / CCUG 14551 / JCM 1027 / KCTC 2358 / NCIMB 9240 / NCTC 8049).